The chain runs to 219 residues: Uracil-DNA glycosylase (219 aa).

The active-site Proton acceptor is the Asp-63.

The protein belongs to the uracil-DNA glycosylase (UDG) superfamily. UNG family.

Its subcellular location is the cytoplasm. It catalyses the reaction Hydrolyzes single-stranded DNA or mismatched double-stranded DNA and polynucleotides, releasing free uracil.. In terms of biological role, excises uracil residues from the DNA which can arise as a result of misincorporation of dUMP residues by DNA polymerase or due to deamination of cytosine. This Mesomycoplasma hyopneumoniae (strain 7448) (Mycoplasma hyopneumoniae) protein is Uracil-DNA glycosylase.